Here is a 211-residue protein sequence, read N- to C-terminus: Peptidyl-tRNA hydrolase (211 aa).

Tyr-15 is a binding site for tRNA. The Proton acceptor role is filled by His-20. TRNA contacts are provided by Phe-66, Asn-68, and Asn-114. The disordered stretch occupies residues Thr-189–Asp-211. The segment covering Thr-197–Asp-211 has biased composition (low complexity).

Belongs to the PTH family. As to quaternary structure, monomer.

It is found in the cytoplasm. It catalyses the reaction an N-acyl-L-alpha-aminoacyl-tRNA + H2O = an N-acyl-L-amino acid + a tRNA + H(+). In terms of biological role, hydrolyzes ribosome-free peptidyl-tRNAs (with 1 or more amino acids incorporated), which drop off the ribosome during protein synthesis, or as a result of ribosome stalling. Functionally, catalyzes the release of premature peptidyl moieties from peptidyl-tRNA molecules trapped in stalled 50S ribosomal subunits, and thus maintains levels of free tRNAs and 50S ribosomes. This chain is Peptidyl-tRNA hydrolase, found in Acidovorax ebreus (strain TPSY) (Diaphorobacter sp. (strain TPSY)).